Consider the following 250-residue polypeptide: Proteasome subunit alpha type-8 (250 aa).

It belongs to the peptidase T1A family. As to quaternary structure, component of the outer alpha-ring of the 20S proteasome core which is composed of 28 subunits that are arranged in four stacked rings, resulting in a barrel-shaped structure. The catalytic chamber with the active sites is on the inside of the barrel. Interacts with canonical subunits of the spermatoproteasome, including proteasome activators PSME4 (also called PA200) and PSME3 (also called PA28-gamma). Interacts with proteasome-interacting proteins chaperones including CCT6B and CCT2, ubiquitin ligases (TRIP12, NEDD4, TRIM36 and RAD18), and ubiquitin specific proteases such as USP9X, USP34, USP5 and USP47. Interacts with meiotic proteins cyclin dependent kinase CDK1 and the ATPase TRIP13 as well as proteins of the synaptonemal complex SIX6OS1 and SYCE3.

It localises to the nucleus. Component of the spermatoproteasome, a proteasome specifically found in testis that promotes acetylation-dependent degradation of histones, thereby participating actively to the exchange of histones during spermatogenesis. The proteasome is a protein complex that degrades unneeded or damaged proteins by proteolysis, a chemical reaction that breaks peptide bonds. Required for 20S core proteasome assembly, essential for the degradation of meiotic proteins RAD51 and RPA1 at late prophase I and the progression of meiosis I during spermatogenesis. Localizes to the synaptonemal complex, a 'zipper'-like structure that holds homologous chromosome pairs in synapsis during meiotic prophase I. This is Proteasome subunit alpha type-8 from Mus musculus (Mouse).